The sequence spans 361 residues: Phenylalanine--tRNA ligase alpha subunit (361 aa).

Residue E260 coordinates Mg(2+).

This sequence belongs to the class-II aminoacyl-tRNA synthetase family. Phe-tRNA synthetase alpha subunit type 1 subfamily. Tetramer of two alpha and two beta subunits. Mg(2+) serves as cofactor.

The protein resides in the cytoplasm. The enzyme catalyses tRNA(Phe) + L-phenylalanine + ATP = L-phenylalanyl-tRNA(Phe) + AMP + diphosphate + H(+). In Bartonella quintana (strain Toulouse) (Rochalimaea quintana), this protein is Phenylalanine--tRNA ligase alpha subunit.